Reading from the N-terminus, the 219-residue chain is MDRIVSSSHDRTSLLSTHKVLRNTYFLLSLTLAFSAITATASTVLMLPSPGLILTLVGMYGLMFLTYKTANKPTGIISAFAFTGFLGYILGPILNTYLSAGMGDVIAMALGGTALVFFCCSAYVLTTRKDMSFLGGMLMAGIVVVLIGMVANIFLQLPALHLAISAVFILISSGAILFETSNIIHGGETNYIRATVSLYVSLYNIFVSLLSILGFASRD.

Residues 1 to 22 (MDRIVSSSHDRTSLLSTHKVLR) are Periplasmic-facing. Helical transmembrane passes span 23–43 (NTYF…TAST) and 44–64 (VLML…GLMF). At 65–73 (LTYKTANKP) the chain is on the periplasmic side. Residues 74-94 (TGIISAFAFTGFLGYILGPIL) form a helical membrane-spanning segment. Topologically, residues 95–104 (NTYLSAGMGD) are cytoplasmic. Residues 105-125 (VIAMALGGTALVFFCCSAYVL) traverse the membrane as a helical segment. At 126–133 (TTRKDMSF) the chain is on the periplasmic side. The helical transmembrane segment at 134-154 (LGGMLMAGIVVVLIGMVANIF) threads the bilayer. Over 155-157 (LQL) the chain is Cytoplasmic. The helical transmembrane segment at 158 to 178 (PALHLAISAVFILISSGAILF) threads the bilayer. Residues 179-195 (ETSNIIHGGETNYIRAT) lie on the Periplasmic side of the membrane. Residues 196–216 (VSLYVSLYNIFVSLLSILGFA) traverse the membrane as a helical segment. Over 217–219 (SRD) the chain is Cytoplasmic.

The protein belongs to the BI1 family.

Its subcellular location is the cell inner membrane. The chain is Inner membrane protein YccA (yccA) from Escherichia coli O6:H1 (strain CFT073 / ATCC 700928 / UPEC).